Here is a 255-residue protein sequence, read N- to C-terminus: tRNA pseudouridine synthase A (255 aa).

Residue aspartate 52 is the Nucleophile of the active site. Tyrosine 111 contributes to the substrate binding site.

This sequence belongs to the tRNA pseudouridine synthase TruA family. As to quaternary structure, homodimer.

The enzyme catalyses uridine(38/39/40) in tRNA = pseudouridine(38/39/40) in tRNA. Formation of pseudouridine at positions 38, 39 and 40 in the anticodon stem and loop of transfer RNAs. The polypeptide is tRNA pseudouridine synthase A (Cereibacter sphaeroides (strain ATCC 17023 / DSM 158 / JCM 6121 / CCUG 31486 / LMG 2827 / NBRC 12203 / NCIMB 8253 / ATH 2.4.1.) (Rhodobacter sphaeroides)).